Consider the following 404-residue polypeptide: Synaptic vesicle membrane protein VAT-1 homolog (404 aa).

The tract at residues 1–55 (MSAEREATEAATVAAAAEARAETGAGEGAPSQPPTVEVASDPQPPPAPEASASAS) is disordered. Position 2 is an N-acetylserine (Ser2). The residue at position 2 (Ser2) is a Phosphoserine. Residues 9–24 (EAATVAAAAEARAETG) show a composition bias toward low complexity. Phosphoserine occurs at positions 31 and 40.

This sequence belongs to the zinc-containing alcohol dehydrogenase family. Quinone oxidoreductase subfamily. Interacts with MFN1 and MFN2. In terms of tissue distribution, ubiquitously expressed.

Its subcellular location is the cytoplasm. It is found in the mitochondrion outer membrane. Plays a part in calcium-regulated keratinocyte activation in epidermal repair mechanisms. Has no effect on cell proliferation. Possesses ATPase activity. May negatively regulate mitochondrial fusion. The polypeptide is Synaptic vesicle membrane protein VAT-1 homolog (Vat1) (Rattus norvegicus (Rat)).